The following is a 317-amino-acid chain: Probable deoxyhypusine synthase 1 (317 aa).

Lys-285 (nucleophile) is an active-site residue.

Belongs to the deoxyhypusine synthase family. NAD(+) is required as a cofactor.

It catalyses the reaction [eIF5A protein]-L-lysine + spermidine = [eIF5A protein]-deoxyhypusine + propane-1,3-diamine. It functions in the pathway protein modification; eIF5A hypusination. In terms of biological role, catalyzes the NAD-dependent oxidative cleavage of spermidine and the subsequent transfer of the butylamine moiety of spermidine to the epsilon-amino group of a specific lysine residue of the eIF-5A precursor protein to form the intermediate deoxyhypusine residue. This chain is Probable deoxyhypusine synthase 1 (dys1), found in Methanosarcina acetivorans (strain ATCC 35395 / DSM 2834 / JCM 12185 / C2A).